The following is a 271-amino-acid chain: Acetyl-coenzyme A carboxylase carboxyl transferase subunit alpha (271 aa).

The 247-residue stretch at 1-247 (MSRELIRTVD…KKTILEALGE (247 aa)) folds into the CoA carboxyltransferase C-terminal domain.

It belongs to the AccA family. In terms of assembly, acetyl-CoA carboxylase is a heterohexamer composed of biotin carboxyl carrier protein (AccB), biotin carboxylase (AccC) and two subunits each of ACCase subunit alpha (AccA) and ACCase subunit beta (AccD).

The protein localises to the cytoplasm. It carries out the reaction N(6)-carboxybiotinyl-L-lysyl-[protein] + acetyl-CoA = N(6)-biotinyl-L-lysyl-[protein] + malonyl-CoA. It participates in lipid metabolism; malonyl-CoA biosynthesis; malonyl-CoA from acetyl-CoA: step 1/1. In terms of biological role, component of the acetyl coenzyme A carboxylase (ACC) complex. First, biotin carboxylase catalyzes the carboxylation of biotin on its carrier protein (BCCP) and then the CO(2) group is transferred by the carboxyltransferase to acetyl-CoA to form malonyl-CoA. This Clostridium perfringens (strain SM101 / Type A) protein is Acetyl-coenzyme A carboxylase carboxyl transferase subunit alpha.